The primary structure comprises 274 residues: Large ribosomal subunit protein uL2cz/uL2cy (274 aa).

Disordered stretches follow at residues 1 to 25 (MAIH…VKSN) and 223 to 274 (MNPV…RRTK).

The protein belongs to the universal ribosomal protein uL2 family. In terms of assembly, part of the 50S ribosomal subunit.

The protein localises to the plastid. It is found in the chloroplast. This is Large ribosomal subunit protein uL2cz/uL2cy (rpl2-A) from Citrus sinensis (Sweet orange).